A 124-amino-acid chain; its full sequence is Large ribosomal subunit protein uL22 (124 aa).

It belongs to the universal ribosomal protein uL22 family. In terms of assembly, part of the 50S ribosomal subunit.

Functionally, this protein binds specifically to 23S rRNA; its binding is stimulated by other ribosomal proteins, e.g. L4, L17, and L20. It is important during the early stages of 50S assembly. It makes multiple contacts with different domains of the 23S rRNA in the assembled 50S subunit and ribosome. In terms of biological role, the globular domain of the protein is located near the polypeptide exit tunnel on the outside of the subunit, while an extended beta-hairpin is found that lines the wall of the exit tunnel in the center of the 70S ribosome. The polypeptide is Large ribosomal subunit protein uL22 (Macrococcus caseolyticus (strain JCSC5402) (Macrococcoides caseolyticum)).